Reading from the N-terminus, the 199-residue chain is Large ribosomal subunit protein bL17 (199 aa).

The tract at residues 123 to 199 (DEANRARRAA…EESEAKDDTK (77 aa)) is disordered. Basic and acidic residues predominate over residues 137 to 152 (KADERADEKADEKAEE). Acidic residues predominate over residues 153–199 (TVEETTEAPAEESTEAAAEETVEETTEAPAEESTEAAEESEAKDDTK).

The protein belongs to the bacterial ribosomal protein bL17 family. Part of the 50S ribosomal subunit. Contacts protein L32.

The protein is Large ribosomal subunit protein bL17 of Mycolicibacterium smegmatis (strain ATCC 700084 / mc(2)155) (Mycobacterium smegmatis).